The following is a 214-amino-acid chain: ATP-dependent Clp protease proteolytic subunit (214 aa).

Catalysis depends on Ser113, which acts as the Nucleophile. His138 is an active-site residue.

The protein belongs to the peptidase S14 family. Fourteen ClpP subunits assemble into 2 heptameric rings which stack back to back to give a disk-like structure with a central cavity, resembling the structure of eukaryotic proteasomes.

It localises to the cytoplasm. It catalyses the reaction Hydrolysis of proteins to small peptides in the presence of ATP and magnesium. alpha-casein is the usual test substrate. In the absence of ATP, only oligopeptides shorter than five residues are hydrolyzed (such as succinyl-Leu-Tyr-|-NHMec, and Leu-Tyr-Leu-|-Tyr-Trp, in which cleavage of the -Tyr-|-Leu- and -Tyr-|-Trp bonds also occurs).. In terms of biological role, cleaves peptides in various proteins in a process that requires ATP hydrolysis. Has a chymotrypsin-like activity. Plays a major role in the degradation of misfolded proteins. This Teredinibacter turnerae (strain ATCC 39867 / T7901) protein is ATP-dependent Clp protease proteolytic subunit.